We begin with the raw amino-acid sequence, 68 residues long: Antimicrobial peptide VpCT3 (68 aa).

Positions 1-23 (MKTQIVILIVAVLVLQLVSQSDA) are cleaved as a signal peptide. Leu36 is modified (leucine amide). Residues 37 to 68 (GKRGLKNLDQYNDLFDGEISDADIKFLQDLMR) constitute a propeptide that is removed on maturation.

This sequence belongs to the non-disulfide-bridged peptide (NDBP) superfamily. Short antimicrobial peptide (group 4) family. In terms of tissue distribution, expressed by the venom gland.

The protein resides in the secreted. The protein localises to the target cell membrane. Functionally, antimicrobial peptide with weak activity against all bacteria tested (MIC&gt;100 uM) and all yeasts tested (MIC&gt;200 uM). Also provokes weak hemolysis on human erythrocytes (HC(50)=83.7 uM). The protein is Antimicrobial peptide VpCT3 of Mesomexovis punctatus (Scorpion).